We begin with the raw amino-acid sequence, 187 residues long: Large ribosomal subunit protein uL5 (187 aa).

This sequence belongs to the universal ribosomal protein uL5 family. Part of the 50S ribosomal subunit; part of the 5S rRNA/L5/L18/L25 subcomplex. Contacts the 5S rRNA and the P site tRNA. Forms a bridge to the 30S subunit in the 70S ribosome.

Functionally, this is one of the proteins that bind and probably mediate the attachment of the 5S RNA into the large ribosomal subunit, where it forms part of the central protuberance. In the 70S ribosome it contacts protein S13 of the 30S subunit (bridge B1b), connecting the 2 subunits; this bridge is implicated in subunit movement. Contacts the P site tRNA; the 5S rRNA and some of its associated proteins might help stabilize positioning of ribosome-bound tRNAs. The chain is Large ribosomal subunit protein uL5 from Mycobacterium bovis (strain ATCC BAA-935 / AF2122/97).